Consider the following 586-residue polypeptide: Transmembrane protease serine 13 (586 aa).

Disordered regions lie at residues 1–115 (MERD…VTTS) and 131–157 (PIRSSPARSAPATRATRESPGTSLPKF). The Cytoplasmic segment spans residues 1 to 165 (MERDSHGNAS…KFTWREGQKQ (165 aa)). The 1-1 repeat unit spans residues 9 to 13 (ASPAR). The 13 X 5 AA repeats of A-S-P-A-[GLQR] stretch occupies residues 9–93 (ASPARTPSAG…ASPARASPAL (85 aa)). Residues 14–18 (TPSAG) form a 2-1; approximate repeat. Residues 14-52 (TPSAGASPAQASPAGTPPGRASPAQASPAQASPAGTPPG) are compositionally biased toward low complexity. The segment at 14-68 (TPSAGASPAQASPAGTPPGRASPAQASPAQASPAGTPPGRASPAQASPAGTPPGR) is 4 X 5 AA repeats of T-P-P-G-R. Repeat copies occupy residues 19 to 23 (ASPAQ), 24 to 28 (ASPAG), 29 to 33 (TPPGR), 34 to 38 (ASPAQ), 39 to 43 (ASPAQ), 44 to 48 (ASPAG), 49 to 53 (TPPGR), 54 to 58 (ASPAQ), 59 to 63 (ASPAG), and 64 to 68 (TPPGR). Residues 69-78 (ASPGRASPAQ) form a 1-9; approximate repeat. Composition is skewed to low complexity over residues 69–111 (ASPG…RSAS) and 133–144 (RSSPARSAPATR). A run of 3 repeats spans residues 79–83 (ASPAQ), 84–88 (ASPAR), and 89–93 (ASPAL). Residues 166–186 (LPLIGCVLLLIALVVSLIILF) form a helical; Signal-anchor for type II membrane protein membrane-spanning segment. At 187–586 (QFWQGHTGIR…GGDPGGAPRL (400 aa)) the chain is on the extracellular side. An SRCR domain is found at 195-325 (IRYKEQRESC…HCGLRAMTGR (131 aa)). One can recognise an LDL-receptor class A domain in the interval 204–226 (CPKHAVRCDGVVDCKLKSDELGC). 3 cysteine pairs are disulfide-bonded: Cys-250–Cys-314, Cys-263–Cys-317, and Cys-351–Cys-367. N-linked (GlcNAc...) asparagine glycosylation is found at Asn-255 and Asn-292. Residues 326-559 (IVGGALASDS…VLPWIYSKME (234 aa)) form the Peptidase S1 domain. His-366 acts as the Charge relay system in catalysis. Asn-405 carries an N-linked (GlcNAc...) asparagine glycan. Asp-414 serves as the catalytic Charge relay system. The N-linked (GlcNAc...) asparagine glycan is linked to Asn-445. 3 cysteine pairs are disulfide-bonded: Cys-448-Cys-517, Cys-480-Cys-496, and Cys-507-Cys-535. The active-site Charge relay system is Ser-511. Over residues 565-574 (QDTAPSRLGT) the composition is skewed to polar residues. A disordered region spans residues 565 to 586 (QDTAPSRLGTSSGGDPGGAPRL). Positions 575–586 (SSGGDPGGAPRL) are enriched in gly residues.

This sequence belongs to the peptidase S1 family. In terms of assembly, interacts with SPINT1/HAI-1; the interaction promotes the phosphorylation and cell membrane localization of TMPRSS13. Interacts with SPINT2/HAI-2; the interaction promotes the phosphorylation and cell membrane localization of TMPRSS13. In terms of processing, the inactive zymogen is post-translationally modified and then trafficked to the cell surface, whereby it undergoes autocatalytic cleavage resulting in an activated form that is released extracellularly. Phosphorylation is required for localization at the cell surface. Phosphorylation increases following inhibition of protease activity by SPINT2/HAI-2. Post-translationally, N-glycosylation of Asn-405 and Asn-445 is required for exit from the endoplasmic reticulum and trafficking to the cell surface. Also required for autocleavage of the zymogen, activation and secretion of the mature protein. Expressed in placenta. As to expression, predominantly expressed in lung, placenta, pancreas, and prostate. In terms of tissue distribution, expressed in lung, placenta, pancreas, and prostate. Weakly expressed in testis and peripheral blood lymphocytes.

It localises to the cell membrane. Its subcellular location is the secreted. The protein localises to the cytoplasm. With respect to regulation, cleavage of HGF is inhibited by SPINT1/HAI-1 via the BPTI/Kunitz inhibitor 1 domain. Functionally, serine protease. Cleaves the proform of PRSS8/prostasin to form the active protein. Cleaves the proform of HGF to form the active protein which promotes MAPK signaling. Promotes the formation of the stratum corneum and subsequently the epidermal barrier in embryos. The sequence is that of Transmembrane protease serine 13 (TMPRSS13) from Homo sapiens (Human).